We begin with the raw amino-acid sequence, 319 residues long: tRNA U34 carboxymethyltransferase (319 aa).

Carboxy-S-adenosyl-L-methionine is bound by residues Lys88, Trp102, Lys107, Gly126, Leu176–Glu177, Met192, Tyr196, and Arg311.

The protein belongs to the class I-like SAM-binding methyltransferase superfamily. CmoB family. As to quaternary structure, homotetramer.

It carries out the reaction carboxy-S-adenosyl-L-methionine + 5-hydroxyuridine(34) in tRNA = 5-carboxymethoxyuridine(34) in tRNA + S-adenosyl-L-homocysteine + H(+). Functionally, catalyzes carboxymethyl transfer from carboxy-S-adenosyl-L-methionine (Cx-SAM) to 5-hydroxyuridine (ho5U) to form 5-carboxymethoxyuridine (cmo5U) at position 34 in tRNAs. The polypeptide is tRNA U34 carboxymethyltransferase (Azotobacter vinelandii (strain DJ / ATCC BAA-1303)).